The following is a 298-amino-acid chain: Inosose dehydratase (298 aa).

It belongs to the IolE/MocC family. Requires glutathione as cofactor. Co(2+) is required as a cofactor. The cofactor is Mn(2+).

The enzyme catalyses scyllo-inosose = 3D-3,5/4-trihydroxycyclohexane-1,2-dione + H2O. The protein operates within polyol metabolism; myo-inositol degradation into acetyl-CoA; acetyl-CoA from myo-inositol: step 2/7. Functionally, catalyzes the dehydration of inosose (2-keto-myo-inositol, 2KMI or 2,4,6/3,5-pentahydroxycyclohexanone) to 3D-(3,5/4)-trihydroxycyclohexane-1,2-dione (D-2,3-diketo-4-deoxy-epi-inositol). The sequence is that of Inosose dehydratase from Clostridium tetani (strain Massachusetts / E88).